The chain runs to 80 residues: Conotoxin SmIVB (80 aa).

An N-terminal signal peptide occupies residues 1–21 (MGMRMMFTVFLLVVLATTVVS). A propeptide spanning residues 22–38 (IPSDRASDGRNAEVNER) is cleaved from the precursor. Pro40 carries the post-translational modification 4-hydroxyproline. A glycan (O-linked (HexNAc...) serine) is linked at Ser45. Residues Pro55, Pro60, Pro61, Pro70, and Pro72 each carry the 4-hydroxyproline modification. Ser75 carries the post-translational modification Serine amide. Residues 76–80 (GRRNH) constitute a propeptide that is removed on maturation.

Belongs to the conotoxin A superfamily. In terms of processing, contains 3 disulfide bonds. In terms of tissue distribution, expressed by the venom duct.

Its subcellular location is the secreted. Functionally, neurotoxin with probable activity on sodium channel. Induces intense repetitive firing of the frog neuromuscular junction, leading to a tetanic contracture in muscle fiber (spastic paralysis). In vivo, shows the same effect as the whole venom when injected on fish prey. This Conus stercusmuscarum (Fly-specked cone) protein is Conotoxin SmIVB.